Consider the following 190-residue polypeptide: Probable E3 ubiquitin-protein ligase RHB1A (190 aa).

Residues 139–180 (CPICFEDYDVENPRLTTKCEHEFHLSCLLEWIERSDRCPICD) form an RING-type; atypical zinc finger.

The enzyme catalyses S-ubiquitinyl-[E2 ubiquitin-conjugating enzyme]-L-cysteine + [acceptor protein]-L-lysine = [E2 ubiquitin-conjugating enzyme]-L-cysteine + N(6)-ubiquitinyl-[acceptor protein]-L-lysine.. The protein operates within protein modification; protein ubiquitination. Probable E3 ubiquitin-protein ligase that may possess E3 ubiquitin ligase activity in vitro. This is Probable E3 ubiquitin-protein ligase RHB1A from Arabidopsis thaliana (Mouse-ear cress).